Here is a 276-residue protein sequence, read N- to C-terminus: MDTRYTHSPKDISHYSTEELRKEFLVEKVFVPNEVSLTYTHNDRMIFGGVTPTTESLEIILNKELGVDYFLERRELGVINIGGPGFIEIDGRKEAMKKQDGYYVGKETRQVIFSSEDAADPAKFYISSAPAHHKYPNVKISIDEIKPMETGEALTLNERKIYQYIHPNICESCQLQMGYTILEPGSSWNTMPCHTHERRMEAYVYFDMEEDTKIFHMMGDPAETKHLVMGNEQAVISPSWSIHSGVGTSNYSFIWAMCGENITYTDMDMVPMDELK.

Zn(2+) is bound by residues His-194, His-196, Glu-201, and His-243.

This sequence belongs to the KduI family. The cofactor is Zn(2+).

It carries out the reaction 5-dehydro-4-deoxy-D-glucuronate = 3-deoxy-D-glycero-2,5-hexodiulosonate. It participates in glycan metabolism; pectin degradation; 2-dehydro-3-deoxy-D-gluconate from pectin: step 4/5. Functionally, catalyzes the isomerization of 5-dehydro-4-deoxy-D-glucuronate to 3-deoxy-D-glycero-2,5-hexodiulosonate. The chain is 4-deoxy-L-threo-5-hexosulose-uronate ketol-isomerase 2 (kduI2) from Enterococcus faecalis (strain ATCC 700802 / V583).